The sequence spans 902 residues: MKKLLPLCCWHSWLLLFYCDFQVRGAHTRSHVHPGFEVLASASHYWPLENVDGIHELQETTGASRTHNLTVLPSHNSTFVYTNDSAYSNFSATVDIVEGKVNKGIYLKEGKGVTFLYYRKNKTSCISNPAQCGPEGVSFSFFWKTQGEQSTSIPSAYGGQVISNGFKVCSRGGKGSVELYTHNKSVTWEASFSPPGHYWTHVLFTWKSEEGLKVYVNGTLRTSDPSGKASPAYGESNDNLVLDLTKSYENRAFDEFIIWERALTPDEIAMYFTAAIGEQLSLSSTPPSFSVTPTVNTMAPTNAYHPIITNLTEERKNFRRPGVVLSYLQNMSLSLPNKSLSEETAFNLTKTFLNTVGEVLRLPSWTAVSEDSAVVPGLIDTIDTVMSHITYNLQASKPQVAIVGSSSMADFSVAKVLPKTMNSSHYRFPARGQNYIEIPHEAFHSQAWTTIVGLLYHSVHYYLSNIQPASTKIAEAANYKNCLLSATSYLISLEVSPTPKLSQNLSGSPLITVHLRHHLTQRQYTEATNESNRIFLYCAFLDFSSGEGIWSNQGCALTEGNLSYSICRCTHLTNFAILMQVVPLELTRGHQVALSSISYIGCSLSVLCLAITLVTFAVLSSVSTIRNQRYHIHANLSCAVLVAQVLLLISFRFEPGTAPCQVLAMLLHYFFLSAFAWMLVEGLHLYSMVIKVFGSEDSKHRYYYGIGWGFPLLICIISIVFAMDSYGTSKNCWLSLGNGAIWAFVAPALFIIVVNIGILIAVTRVISQISAENYKIHGDPSAFKLTAKAVAVLLPILGTSWVFGVLAVNNQAMVFQYMFAILNSLQGFFIFLFHCLLNSEVRAAFKHKTKVWSLTSSSSRQANVKPFSSDIMNGTRPATGSTRLSPWDKSSHSGHRVDLSAV.

The N-terminal stretch at 1-25 is a signal peptide; it reads MKKLLPLCCWHSWLLLFYCDFQVRG. Residues 26 to 598 are Extracellular-facing; it reads AHTRSHVHPG…GHQVALSSIS (573 aa). 15 N-linked (GlcNAc...) asparagine glycosylation sites follow: asparagine 68, asparagine 76, asparagine 83, asparagine 89, asparagine 121, asparagine 183, asparagine 217, asparagine 310, asparagine 330, asparagine 337, asparagine 347, asparagine 422, asparagine 504, asparagine 529, and asparagine 561. Positions 111 to 304 constitute a Pentraxin (PTX) domain; sequence KGVTFLYYRK…VNTMAPTNAY (194 aa). In terms of domain architecture, GAIN-B spans 399–585; it reads QVAIVGSSSM…AILMQVVPLE (187 aa). Disulfide bonds link cysteine 538–cysteine 567 and cysteine 555–cysteine 569. The tract at residues 538–585 is GPS; sequence CAFLDFSSGEGIWSNQGCALTEGNLSYSICRCTHLTNFAILMQVVPLE. The tract at residues 574 to 582 is stachel; the sequence is NFAILMQVV. Position 591 (glutamine 591) interacts with 17beta-hydroxy-5alpha-androstan-3-one. Residues 599–619 traverse the membrane as a helical segment; sequence YIGCSLSVLCLAITLVTFAVL. The Cytoplasmic segment spans residues 620–630; that stretch reads SSVSTIRNQRY. The chain crosses the membrane as a helical span at residues 631–651; the sequence is HIHANLSCAVLVAQVLLLISF. Residues 652 to 661 lie on the Extracellular side of the membrane; it reads RFEPGTAPCQ. Cysteine 660 and cysteine 732 are joined by a disulfide. A helical transmembrane segment spans residues 662 to 682; the sequence is VLAMLLHYFFLSAFAWMLVEG. Residues 683–702 are Cytoplasmic-facing; sequence LHLYSMVIKVFGSEDSKHRY. Residues 703–723 traverse the membrane as a helical segment; sequence YYGIGWGFPLLICIISIVFAM. The Extracellular segment spans residues 724–739; it reads DSYGTSKNCWLSLGNG. The helical transmembrane segment at 740 to 760 threads the bilayer; sequence AIWAFVAPALFIIVVNIGILI. The Cytoplasmic portion of the chain corresponds to 761–788; sequence AVTRVISQISAENYKIHGDPSAFKLTAK. The chain crosses the membrane as a helical span at residues 789-809; sequence AVAVLLPILGTSWVFGVLAVN. At 810–812 the chain is on the extracellular side; it reads NQA. The chain crosses the membrane as a helical span at residues 813 to 833; the sequence is MVFQYMFAILNSLQGFFIFLF. The Cytoplasmic segment spans residues 834–902; that stretch reads HCLLNSEVRA…SGHRVDLSAV (69 aa). The disordered stretch occupies residues 865–902; that stretch reads KPFSSDIMNGTRPATGSTRLSPWDKSSHSGHRVDLSAV. Over residues 870 to 884 the composition is skewed to polar residues; that stretch reads DIMNGTRPATGSTRL. The span at 889-902 shows a compositional bias: basic and acidic residues; it reads KSSHSGHRVDLSAV.

This sequence belongs to the G-protein coupled receptor 2 family. Adhesion G-protein coupled receptor (ADGR) subfamily. As to quaternary structure, heterodimer of 2 chains generated by proteolytic processing; the large extracellular N-terminal fragment and the membrane-bound C-terminal fragment predominantly remain associated and non-covalently linked. Interacts with ESYT1; interaction takes place in absence of cytosolic calcium and inhibits the G protein-coupled receptor activity of ADGRD1. In terms of processing, autoproteolytically processed at the GPS region of the GAIN-B domain; this cleavage modulates receptor activity. Cleavage takes place early in the secretory pathway before N-glycosylation.

Its subcellular location is the cell membrane. With respect to regulation, forms a heterodimer of 2 chains generated by proteolytic processing that remain associated through non-covalent interactions mediated by the GAIN-B domain. In the inactivated receptor, the Stachel sequence (also named stalk) is embedded in the GAIN-B domain, where it adopts a beta-strand conformation. On activation, the Stachel moves into the 7 transmembrane region and adopts a twisted hook-shaped configuration that forms contacts within the receptor, leading to coupling of a G-alpha protein, which activates signaling. The cleaved GAIN-B and N-terminal domains can then dissociate from the rest of the receptor. Interaction with ESYT1 in absence of cytosolic calcium inhibits the G protein-coupled receptor activity; interaction and inhibition is relieved when cytosolic calcium increases. Adhesion G-protein coupled receptor (aGPCR) for androgen hormone 5alpha-dihydrotestosterone (5alpha-DHT), also named 17beta-hydroxy-5alpha-androstan-3-one, the most potent hormone among androgens. Also activated by methenolone drug. Ligand binding causes a conformation change that triggers signaling via guanine nucleotide-binding proteins (G proteins) and modulates the activity of downstream effectors, such as adenylate cyclase. ADGRD1 is coupled to G(s) G proteins and mediates activation of adenylate cyclase activity. Acts as a 5alpha-DHT receptor in muscle cells, thereby increasing intracellular cyclic AMP (cAMP) levels and enhancing muscle strength. The protein is Adhesion G-protein coupled receptor D1 (ADGRD1) of Bos taurus (Bovine).